Consider the following 590-residue polypeptide: Fucose-1-phosphate guanylyltransferase (590 aa).

As to expression, expressed at highest levels in brain, moderately in testis, ovary and kidney, and weakly in liver, spleen, heart and lung.

Its subcellular location is the cytoplasm. The enzyme catalyses beta-L-fucose 1-phosphate + GTP + H(+) = GDP-beta-L-fucose + diphosphate. Catalyzes the formation of GDP-L-fucose from GTP and L-fucose-1-phosphate. Functions as a salvage pathway to reutilize L-fucose arising from the turnover of glycoproteins and glycolipids. The protein is Fucose-1-phosphate guanylyltransferase of Mus musculus (Mouse).